Consider the following 360-residue polypeptide: MPAPAALRVRGSSSPRVALALGSGGARGYAHIGVIQALRERGYDIVGIAGSSMGAVVGGVHAAGRLDEFAHWAKSLTQRTILRLLDPSISAAGILRAEKILDAVRDIVGPVAIEQLPIPYTAVATDLLAGKSVWFQRGPLDAAIRASIAIPGVIAPHEVDGRLLADGGILDPLPMAPIAGVNADLTIAVSLNGSEAGPARDAEPNVTAEWLNRMVRSTSALFDVSAARSLLDRPTARAVLSRFGAAAAESDSWSQAPEIEQRPAGPPADREEAADTPGLPKMGSFEVMNRTIDIAQSALARHTLAGYPADLLIEVPRSTCRSLEFHRAVEVIAVGRALATQALEAFEIDDDESAAATIEG.

A PNPLA domain is found at 19-179 (LALGSGGARG…LDPLPMAPIA (161 aa)). The short motif at 50-54 (GSSMG) is the GXSXG element. The Nucleophile role is filled by serine 52. The Proton acceptor role is filled by aspartate 166. Positions 166 to 168 (DGG) match the DGA/G motif. The tract at residues 251–282 (DSWSQAPEIEQRPAGPPADREEAADTPGLPKM) is disordered.

It belongs to the NTE family.

This is an uncharacterized protein from Mycobacterium bovis (strain ATCC BAA-935 / AF2122/97).